The sequence spans 87 residues: Sec-independent protein translocase protein TatA (87 aa).

The helical transmembrane segment at 3–23 (GTFSWTHLLIIALLFVVLFGA) threads the bilayer. A disordered region spans residues 47 to 87 (MQHETPQANAAPVQQPAQQLPPAQPAQAPAQPVNQAEQKSA). Positions 52–87 (PQANAAPVQQPAQQLPPAQPAQAPAQPVNQAEQKSA) are enriched in low complexity.

Belongs to the TatA/E family. The Tat system comprises two distinct complexes: a TatABC complex, containing multiple copies of TatA, TatB and TatC subunits, and a separate TatA complex, containing only TatA subunits. Substrates initially bind to the TatABC complex, which probably triggers association of the separate TatA complex to form the active translocon.

Its subcellular location is the cell membrane. Functionally, part of the twin-arginine translocation (Tat) system that transports large folded proteins containing a characteristic twin-arginine motif in their signal peptide across membranes. TatA could form the protein-conducting channel of the Tat system. This is Sec-independent protein translocase protein TatA from Nocardia farcinica (strain IFM 10152).